Consider the following 122-residue polypeptide: MHRLNKKAGDYGEKAAEIYLKKSGYTILNRNFRCFLGEVDIIAKNKDYITFVEVKSRWSDTYGLPCEAVNYRKKLKIYRTAKYYIASKSLINYNFRFDVIEVILNHQNDSYDLKFIENAFQI.

This sequence belongs to the UPF0102 family.

The sequence is that of UPF0102 protein CA_C1763 from Clostridium acetobutylicum (strain ATCC 824 / DSM 792 / JCM 1419 / IAM 19013 / LMG 5710 / NBRC 13948 / NRRL B-527 / VKM B-1787 / 2291 / W).